The sequence spans 111 residues: U-scoloptoxin(16)-Er8a (111 aa).

The first 26 residues, 1–26 (MTSTRKLSVSCLIVFMVSSLIAVSSG), serve as a signal peptide directing secretion.

It belongs to the scoloptoxin-16 family. In terms of processing, contains 4 disulfide bonds. Expressed by the venom gland.

Its subcellular location is the secreted. The sequence is that of U-scoloptoxin(16)-Er8a from Ethmostigmus rubripes (Giant centipede).